Consider the following 211-residue polypeptide: Pyrrolidone-carboxylate peptidase 1 (211 aa).

Catalysis depends on residues Glu79, Cys142, and His164.

Belongs to the peptidase C15 family. As to quaternary structure, homotetramer.

It is found in the cytoplasm. It carries out the reaction Release of an N-terminal pyroglutamyl group from a polypeptide, the second amino acid generally not being Pro.. In terms of biological role, removes 5-oxoproline from various penultimate amino acid residues except L-proline. The sequence is that of Pyrrolidone-carboxylate peptidase 1 (pcp1) from Saccharolobus solfataricus (strain ATCC 35092 / DSM 1617 / JCM 11322 / P2) (Sulfolobus solfataricus).